Consider the following 786-residue polypeptide: Polyribonucleotide nucleotidyltransferase (786 aa).

Mg(2+) is bound by residues Asp-516 and Asp-522. One can recognise a KH domain in the interval 582 to 641; it reads PRVTTVKIPVDKIGMVIGPKGQTINAIQDETGAEISIEDDGTIYVGATNGPSAQAAVERV. The 70-residue stretch at 653–722 folds into the S1 motif domain; the sequence is GDRFLGTVVK…QRGKIYLDKV (70 aa). Positions 722 to 786 are disordered; that stretch reads VRPEGAEGPA…SRPRRRTRHS (65 aa). Positions 727 to 738 are enriched in low complexity; it reads AEGPAEAAATDR. A compositionally biased stretch (basic and acidic residues) spans 739–778; that stretch reads PAGRDRGDRAPRDRGDRGDRERGSRGPDRGDGGEGGGESR.

It belongs to the polyribonucleotide nucleotidyltransferase family. Requires Mg(2+) as cofactor.

It localises to the cytoplasm. The enzyme catalyses RNA(n+1) + phosphate = RNA(n) + a ribonucleoside 5'-diphosphate. Involved in mRNA degradation. Catalyzes the phosphorolysis of single-stranded polyribonucleotides processively in the 3'- to 5'-direction. The sequence is that of Polyribonucleotide nucleotidyltransferase from Salinispora arenicola (strain CNS-205).